A 279-amino-acid polypeptide reads, in one-letter code: Protease HtpX homolog (279 aa).

Helical transmembrane passes span 6–26 (VFVL…ALGG) and 29–49 (GAIL…WGSS). His130 serves as a coordination point for Zn(2+). The active site involves Glu131. His134 lines the Zn(2+) pocket. Helical transmembrane passes span 145–165 (IAAT…FFGG) and 176–196 (VAGI…QFAI). Residue Glu201 participates in Zn(2+) binding.

It belongs to the peptidase M48B family. It depends on Zn(2+) as a cofactor.

It localises to the cell inner membrane. The polypeptide is Protease HtpX homolog (Gemmatimonas aurantiaca (strain DSM 14586 / JCM 11422 / NBRC 100505 / T-27)).